The following is a 240-amino-acid chain: MIQVSICSSIGKLTASVGLLIKALSSKTSQVLVGWKVIDKNSKVKIILTIEVNNQGRIFVITGPSGVGKSTLVKALLDHFKEQLFYSISATTRKKRISEKEGIDYFFKDKDEFENLIKQDAFIEWACYNNHYYGTLKSQAEQAIKSGINLMLEIEYQGALQVKSKYPHNVVLIFIKPPSMQELLKRLKKRNDEDETTIKKRLEQAKIEFQQIDNFKYVVTNKEFDKTLNELKSILLSEFI.

The 181-residue stretch at 56–236 folds into the Guanylate kinase-like domain; the sequence is GRIFVITGPS…TLNELKSILL (181 aa). 63-70 provides a ligand contact to ATP; sequence GPSGVGKS.

This sequence belongs to the guanylate kinase family.

Its subcellular location is the cytoplasm. It catalyses the reaction GMP + ATP = GDP + ADP. Essential for recycling GMP and indirectly, cGMP. The sequence is that of Guanylate kinase (gmk) from Mycoplasma genitalium (strain ATCC 33530 / DSM 19775 / NCTC 10195 / G37) (Mycoplasmoides genitalium).